The sequence spans 678 residues: DNA ligase (678 aa).

Residues Asp-47–Asp-51, Ser-96–Leu-97, and Glu-122 each bind NAD(+). The N6-AMP-lysine intermediate role is filled by Lys-124. Residues Arg-145, Glu-182, Lys-300, and Lys-324 each contribute to the NAD(+) site. Residues Cys-418, Cys-421, Cys-436, and Cys-442 each contribute to the Zn(2+) site. In terms of domain architecture, BRCT spans Ala-602–Leu-678.

This sequence belongs to the NAD-dependent DNA ligase family. LigA subfamily. Mg(2+) serves as cofactor. It depends on Mn(2+) as a cofactor.

The enzyme catalyses NAD(+) + (deoxyribonucleotide)n-3'-hydroxyl + 5'-phospho-(deoxyribonucleotide)m = (deoxyribonucleotide)n+m + AMP + beta-nicotinamide D-nucleotide.. Functionally, DNA ligase that catalyzes the formation of phosphodiester linkages between 5'-phosphoryl and 3'-hydroxyl groups in double-stranded DNA using NAD as a coenzyme and as the energy source for the reaction. It is essential for DNA replication and repair of damaged DNA. The polypeptide is DNA ligase (Francisella tularensis subsp. holarctica (strain LVS)).